Reading from the N-terminus, the 208-residue chain is Holliday junction branch migration complex subunit RuvA (208 aa).

Residues 1–63 are domain I; that stretch reads MIAFVSGPVA…EDSLTLYGFA (63 aa). The tract at residues 64–142 is domain II; sequence NDDERQVFEL…EPVGAHIGQQ (79 aa). The segment at 143-147 is flexible linker; sequence GIGTP. Residues 148–208 are domain III; sequence VTSGWRDQLQ…AALQTLNRAR (61 aa).

It belongs to the RuvA family. As to quaternary structure, homotetramer. Forms an RuvA(8)-RuvB(12)-Holliday junction (HJ) complex. HJ DNA is sandwiched between 2 RuvA tetramers; dsDNA enters through RuvA and exits via RuvB. An RuvB hexamer assembles on each DNA strand where it exits the tetramer. Each RuvB hexamer is contacted by two RuvA subunits (via domain III) on 2 adjacent RuvB subunits; this complex drives branch migration. In the full resolvosome a probable DNA-RuvA(4)-RuvB(12)-RuvC(2) complex forms which resolves the HJ.

The protein localises to the cytoplasm. The RuvA-RuvB-RuvC complex processes Holliday junction (HJ) DNA during genetic recombination and DNA repair, while the RuvA-RuvB complex plays an important role in the rescue of blocked DNA replication forks via replication fork reversal (RFR). RuvA specifically binds to HJ cruciform DNA, conferring on it an open structure. The RuvB hexamer acts as an ATP-dependent pump, pulling dsDNA into and through the RuvAB complex. HJ branch migration allows RuvC to scan DNA until it finds its consensus sequence, where it cleaves and resolves the cruciform DNA. The chain is Holliday junction branch migration complex subunit RuvA from Streptomyces griseus subsp. griseus (strain JCM 4626 / CBS 651.72 / NBRC 13350 / KCC S-0626 / ISP 5235).